Consider the following 474-residue polypeptide: Tubulin gamma-2 chain (474 aa).

A GTP-binding site is contributed by 142-148 (AGGTGSG).

The protein belongs to the tubulin family. Gamma-tubulin complex is composed of gamma-tubulin and GCP proteins.

The protein resides in the cytoplasm. It is found in the cytoskeleton. The protein localises to the microtubule organizing center. Its subcellular location is the nucleus. It localises to the cell cortex. Tubulin is the major constituent of microtubules. The gamma chain is found at microtubule organizing centers (MTOC) such as the spindle poles, suggesting that it is involved in the minus-end nucleation of microtubule assembly. In terms of biological role, gamma-tubulin complex is essential for the control of microtubular network remodeling in the course of initiation and development of giant-feeding cells, and for the successful reproduction of nematodes (e.g. Meloidogyne spp.) in their plant hosts. This Arabidopsis thaliana (Mouse-ear cress) protein is Tubulin gamma-2 chain (TUBG2).